The following is a 256-amino-acid chain: 5'-nucleotidase SurE (256 aa).

The a divalent metal cation site is built by Asp-8, Asp-9, Ser-40, and Asn-92.

It belongs to the SurE nucleotidase family. Requires a divalent metal cation as cofactor.

It is found in the cytoplasm. The catalysed reaction is a ribonucleoside 5'-phosphate + H2O = a ribonucleoside + phosphate. In terms of biological role, nucleotidase that shows phosphatase activity on nucleoside 5'-monophosphates. This Sinorhizobium fredii (strain NBRC 101917 / NGR234) protein is 5'-nucleotidase SurE.